Here is a 355-residue protein sequence, read N- to C-terminus: Meiotic coiled-coil protein 4 (355 aa).

Positions 298–338 (QRLSRTEINKEIIEIEKLELEVVQFQMSIANLINTQVEVTN) form a coiled coil.

It localises to the cytoplasm. In terms of biological role, has a role in meiosis. The sequence is that of Meiotic coiled-coil protein 4 (mcp4) from Schizosaccharomyces pombe (strain 972 / ATCC 24843) (Fission yeast).